A 298-amino-acid polypeptide reads, in one-letter code: 4-hydroxy-tetrahydrodipicolinate synthase (298 aa).

A pyruvate-binding site is contributed by Thr-48. The Proton donor/acceptor role is filled by Tyr-137. Residue Lys-166 is the Schiff-base intermediate with substrate of the active site. Residue Ile-207 coordinates pyruvate.

The protein belongs to the DapA family. Homotetramer; dimer of dimers.

It is found in the cytoplasm. The enzyme catalyses L-aspartate 4-semialdehyde + pyruvate = (2S,4S)-4-hydroxy-2,3,4,5-tetrahydrodipicolinate + H2O + H(+). It participates in amino-acid biosynthesis; L-lysine biosynthesis via DAP pathway; (S)-tetrahydrodipicolinate from L-aspartate: step 3/4. Catalyzes the condensation of (S)-aspartate-beta-semialdehyde [(S)-ASA] and pyruvate to 4-hydroxy-tetrahydrodipicolinate (HTPA). This is 4-hydroxy-tetrahydrodipicolinate synthase from Campylobacter lari (strain RM2100 / D67 / ATCC BAA-1060).